The chain runs to 194 residues: UPF0301 protein FTA_1286 (194 aa).

This sequence belongs to the UPF0301 (AlgH) family.

The protein is UPF0301 protein FTA_1286 of Francisella tularensis subsp. holarctica (strain FTNF002-00 / FTA).